The sequence spans 148 residues: Snaclec flavocetin-A subunit beta (148 aa).

The signal sequence occupies residues 1-23 (MGQFIFVSFGFLVVATSLSGTEA). Intrachain disulfides connect Cys-27–Cys-38, Cys-55–Cys-144, and Cys-121–Cys-136. Residues 34–145 (YDEHCYQVFQ…CSSKRYVVCK (112 aa)) form the C-type lectin domain.

The protein belongs to the snaclec family. In terms of assembly, tetramer of heterodimers of alpha and beta subunits (alphabeta)(4); disulfide-linked. As to expression, expressed by the venom gland.

The protein localises to the secreted. In terms of biological role, strong platelet aggregation inhibitor. Binds specifically to platelet glycoprotein Ibalpha (GP1BA) with high affinity and inhibits vWF-dependent platelet aggregation. Has also been observed to induce small agglutinates in washed platelets by binding to GPIb. This chain is Snaclec flavocetin-A subunit beta, found in Protobothrops flavoviridis (Habu).